The chain runs to 145 residues: Large ribosomal subunit protein uL16 (145 aa).

The protein belongs to the universal ribosomal protein uL16 family. As to quaternary structure, part of the 50S ribosomal subunit.

Functionally, binds 23S rRNA and is also seen to make contacts with the A and possibly P site tRNAs. This Desulfitobacterium hafniense (strain DSM 10664 / DCB-2) protein is Large ribosomal subunit protein uL16.